The chain runs to 772 residues: MNCYLLLRFMLGIPLLWPCLGATENSQTKKVKQPVRSHLRVKRGWVWNQFFVPEEMNTTSHHIGQLRSDLDNGNNSFQYKLLGAGAGSTFIIDERTGDIYAIQKLDREERSLYILRAQVIDIATGRAVEPESEFVIKVSDINDNEPKFLDEPYEAIVPEMSPEGTLVIQVTASDADDPSSGNNARLLYSLLQGQPYFSVEPTTGVIRISSKMDRELQDEYWVIIQAKDMIGQPGALSGTTSVLIKLSDVNDNKPIFKESLYRLTVSESAPTGTSIGTIMAYDNDIGENAEMDYSIEEDDSQTFDIITNHETQEGIVILKKKVDFEHQNHYGIRAKVKNHHVPEQLMKYHTEASTTFIKIQVEDVDEPPLFLLPYYVFEVFEETPQGSFVGVVSATDPDNRKSPIRYSITRSKVFNINDNGTITTSNSLDREISAWYNLSITATEKYNIEQISSIPLYVQVLNINDHAPEFSQYYETYVCENAGSGQVIQTISAVDRDESIEEHHFYFNLSVEDTNNSSFTIIDNQDNTAVILTNRTGFNLQEEPVFYISILIADNGIPSLTSTNTLTIHVCDCGDSGSTQTCQYQELVLSMGFKTEVIIAILICIMIIFGFIFLTLGLKQRRKQILFPEKSEDFRENIFQYDDEGGGEEDTEAFDIAELRSSTIMRERKTRKTTSAEIRSLYRQSLQVGPDSAIFRKFILEKLEEANTDPCAPPFDSLQTYAFEGTGSLAGSLSSLESAVSDQDESYDYLNELGPRFKRLACMFGSAVQSNN.

The signal sequence occupies residues 1 to 21 (MNCYLLLRFMLGIPLLWPCLG). A propeptide spanning residues 22–43 (ATENSQTKKVKQPVRSHLRVKR) is cleaved from the precursor. 5 Cadherin domains span residues 44-148 (GWVW…EPKF), 149-256 (LDEP…KPIF), 257-370 (KESL…PPLF), 371-470 (LLPY…APEF), and 470-581 (FSQY…STQT). Residues 44 to 596 (GWVWNQFFVP…LVLSMGFKTE (553 aa)) lie on the Extracellular side of the membrane. N-linked (GlcNAc...) asparagine glycans are attached at residues Asn-57 and Asn-74. Asn-419, Asn-437, Asn-508, Asn-515, Asn-516, and Asn-534 each carry an N-linked (GlcNAc...) asparagine glycan. A helical membrane pass occupies residues 597 to 617 (VIIAILICIMIIFGFIFLTLG). Residues 618 to 772 (LKQRRKQILF…MFGSAVQSNN (155 aa)) are Cytoplasmic-facing.

As to expression, expressed in many tissues, with the exception of uterus.

Its subcellular location is the cell membrane. Functionally, cadherins are calcium-dependent cell adhesion proteins. They preferentially interact with themselves in a homophilic manner in connecting cells; cadherins may thus contribute to the sorting of heterogeneous cell types. In Homo sapiens (Human), this protein is Cadherin-19 (CDH19).